A 366-amino-acid polypeptide reads, in one-letter code: tRNA/tmRNA (uracil-C(5))-methyltransferase (366 aa).

5 residues coordinate S-adenosyl-L-methionine: glutamine 190, tyrosine 218, asparagine 223, glutamate 239, and aspartate 299. Cysteine 324 (nucleophile) is an active-site residue. The Proton acceptor role is filled by glutamate 358.

The protein belongs to the class I-like SAM-binding methyltransferase superfamily. RNA M5U methyltransferase family. TrmA subfamily.

It catalyses the reaction uridine(54) in tRNA + S-adenosyl-L-methionine = 5-methyluridine(54) in tRNA + S-adenosyl-L-homocysteine + H(+). The catalysed reaction is uridine(341) in tmRNA + S-adenosyl-L-methionine = 5-methyluridine(341) in tmRNA + S-adenosyl-L-homocysteine + H(+). In terms of biological role, dual-specificity methyltransferase that catalyzes the formation of 5-methyluridine at position 54 (m5U54) in all tRNAs, and that of position 341 (m5U341) in tmRNA (transfer-mRNA). The sequence is that of tRNA/tmRNA (uracil-C(5))-methyltransferase from Salmonella paratyphi A (strain ATCC 9150 / SARB42).